The chain runs to 747 residues: Polyribonucleotide nucleotidyltransferase (747 aa).

Mg(2+)-binding residues include Asp487 and Asp493. One can recognise a KH domain in the interval 554–613 (PSTTTIKIDKDKIRDVIGPGGKVIKEICETSDAKIDISDDGTVSVYASDRDKLKVALDKI). The S1 motif domain maps to 623 to 691 (GEIFNGTVMK…NKGKAKLTIK (69 aa)). Positions 691-747 (KNADKDKSSNNPKQKNNVNNSKENSEPERRDSSKKRAWNEDNNSDTTEVITERKYFN) are disordered. A compositionally biased stretch (low complexity) spans 699-712 (SNNPKQKNNVNNSK). The span at 730–739 (EDNNSDTTEV) shows a compositional bias: polar residues.

It belongs to the polyribonucleotide nucleotidyltransferase family. Mg(2+) serves as cofactor.

The protein localises to the cytoplasm. It catalyses the reaction RNA(n+1) + phosphate = RNA(n) + a ribonucleoside 5'-diphosphate. In terms of biological role, involved in mRNA degradation. Catalyzes the phosphorolysis of single-stranded polyribonucleotides processively in the 3'- to 5'-direction. The chain is Polyribonucleotide nucleotidyltransferase from Rickettsia akari (strain Hartford).